The primary structure comprises 280 residues: Pantothenate synthetase (280 aa).

30–37 serves as a coordination point for ATP; the sequence is MGYLHEGH. His-37 acts as the Proton donor in catalysis. Gln-61 contacts (R)-pantoate. Residue Gln-61 participates in beta-alanine binding. Residue 147 to 150 coordinates ATP; that stretch reads GKKD. Gln-153 is a binding site for (R)-pantoate. ATP-binding positions include Val-176 and 184–187; that span reads MSSR.

It belongs to the pantothenate synthetase family. As to quaternary structure, homodimer.

Its subcellular location is the cytoplasm. It catalyses the reaction (R)-pantoate + beta-alanine + ATP = (R)-pantothenate + AMP + diphosphate + H(+). It participates in cofactor biosynthesis; (R)-pantothenate biosynthesis; (R)-pantothenate from (R)-pantoate and beta-alanine: step 1/1. In terms of biological role, catalyzes the condensation of pantoate with beta-alanine in an ATP-dependent reaction via a pantoyl-adenylate intermediate. The protein is Pantothenate synthetase of Sulfurihydrogenibium sp. (strain YO3AOP1).